The sequence spans 231 residues: Lipoprotein-releasing system ATP-binding protein LolD (231 aa).

Positions 6-231 (LKCQSVHKVY…VLAKVAPNSL (226 aa)) constitute an ABC transporter domain. 42–49 (GASGSGKS) is an ATP binding site.

The protein belongs to the ABC transporter superfamily. Lipoprotein translocase (TC 3.A.1.125) family. The complex is composed of two ATP-binding proteins (LolD) and two transmembrane proteins (LolC and LolE).

It is found in the cell inner membrane. Functionally, part of the ABC transporter complex LolCDE involved in the translocation of mature outer membrane-directed lipoproteins, from the inner membrane to the periplasmic chaperone, LolA. Responsible for the formation of the LolA-lipoprotein complex in an ATP-dependent manner. This chain is Lipoprotein-releasing system ATP-binding protein LolD, found in Hahella chejuensis (strain KCTC 2396).